The sequence spans 410 residues: Phospho-N-acetylmuramoyl-pentapeptide-transferase (410 aa).

The next 10 helical transmembrane spans lie at 23–43 (YITF…TIYG), 73–93 (TPTM…FLFA), 96–116 (HNIY…IGFV), 132–152 (GIFK…VLYF), 215–235 (WAWL…SNGA), 248–268 (TSAV…NIIF), 285–305 (VFIS…SFPA), 307–327 (VFMG…LAIA), 332–352 (ILIV…IIQV), and 387–407 (KIVT…IVTL).

The protein belongs to the glycosyltransferase 4 family. MraY subfamily. The cofactor is Mg(2+).

The protein localises to the cell inner membrane. The catalysed reaction is UDP-N-acetyl-alpha-D-muramoyl-L-alanyl-gamma-D-glutamyl-meso-2,6-diaminopimeloyl-D-alanyl-D-alanine + di-trans,octa-cis-undecaprenyl phosphate = di-trans,octa-cis-undecaprenyl diphospho-N-acetyl-alpha-D-muramoyl-L-alanyl-D-glutamyl-meso-2,6-diaminopimeloyl-D-alanyl-D-alanine + UMP. It functions in the pathway cell wall biogenesis; peptidoglycan biosynthesis. Functionally, catalyzes the initial step of the lipid cycle reactions in the biosynthesis of the cell wall peptidoglycan: transfers peptidoglycan precursor phospho-MurNAc-pentapeptide from UDP-MurNAc-pentapeptide onto the lipid carrier undecaprenyl phosphate, yielding undecaprenyl-pyrophosphoryl-MurNAc-pentapeptide, known as lipid I. The chain is Phospho-N-acetylmuramoyl-pentapeptide-transferase from Flavobacterium johnsoniae (strain ATCC 17061 / DSM 2064 / JCM 8514 / BCRC 14874 / CCUG 350202 / NBRC 14942 / NCIMB 11054 / UW101) (Cytophaga johnsonae).